Here is a 323-residue protein sequence, read N- to C-terminus: Prenyl transferase (323 aa).

Isopentenyl diphosphate-binding residues include Lys-46, Arg-49, and His-81. The Mg(2+) site is built by Asp-88 and Asp-92. Residue Arg-97 participates in an all-trans-polyprenyl diphosphate binding. Arg-98 contributes to the isopentenyl diphosphate binding site. An all-trans-polyprenyl diphosphate is bound by residues Lys-174, Thr-175, and Gln-212.

It belongs to the FPP/GGPP synthase family. Requires Mg(2+) as cofactor.

Functionally, possible role in synthesis of the nonaprenyl side chain of plastoquinone or in synthesis of other prenyl chains such as undekaprenyl pyrophosphate. The protein is Prenyl transferase (preA) of Synechocystis sp. (strain ATCC 27184 / PCC 6803 / Kazusa).